The sequence spans 149 residues: 3-dehydroquinate dehydratase (149 aa).

The Proton acceptor role is filled by Tyr-26. Residues Asn-77, His-83, and Asp-90 each contribute to the substrate site. Residue His-103 is the Proton donor of the active site. Residues 104–105 (LS) and Arg-114 each bind substrate.

It belongs to the type-II 3-dehydroquinase family. Homododecamer.

It catalyses the reaction 3-dehydroquinate = 3-dehydroshikimate + H2O. The protein operates within metabolic intermediate biosynthesis; chorismate biosynthesis; chorismate from D-erythrose 4-phosphate and phosphoenolpyruvate: step 3/7. Its function is as follows. Catalyzes a trans-dehydration via an enolate intermediate. The sequence is that of 3-dehydroquinate dehydratase from Aeromonas hydrophila subsp. hydrophila (strain ATCC 7966 / DSM 30187 / BCRC 13018 / CCUG 14551 / JCM 1027 / KCTC 2358 / NCIMB 9240 / NCTC 8049).